A 338-amino-acid polypeptide reads, in one-letter code: Anthranilate phosphoribosyltransferase (338 aa).

5-phospho-alpha-D-ribose 1-diphosphate contacts are provided by residues glycine 81, 84–85, threonine 89, 91–94, 109–117, and alanine 121; these read GD, NIST, and KHGNRALSS. Glycine 81 provides a ligand contact to anthranilate. Serine 93 is a Mg(2+) binding site. Residue asparagine 112 coordinates anthranilate. Arginine 167 is a binding site for anthranilate. Mg(2+) is bound by residues aspartate 225 and glutamate 226.

It belongs to the anthranilate phosphoribosyltransferase family. In terms of assembly, homodimer. The cofactor is Mg(2+).

The enzyme catalyses N-(5-phospho-beta-D-ribosyl)anthranilate + diphosphate = 5-phospho-alpha-D-ribose 1-diphosphate + anthranilate. It participates in amino-acid biosynthesis; L-tryptophan biosynthesis; L-tryptophan from chorismate: step 2/5. Functionally, catalyzes the transfer of the phosphoribosyl group of 5-phosphorylribose-1-pyrophosphate (PRPP) to anthranilate to yield N-(5'-phosphoribosyl)-anthranilate (PRA). This Rhizobium johnstonii (strain DSM 114642 / LMG 32736 / 3841) (Rhizobium leguminosarum bv. viciae) protein is Anthranilate phosphoribosyltransferase.